A 302-amino-acid polypeptide reads, in one-letter code: Glutaminase (302 aa).

Positions 61, 111, 155, 162, 186, 238, and 256 each coordinate substrate.

It belongs to the glutaminase family. Homotetramer.

It catalyses the reaction L-glutamine + H2O = L-glutamate + NH4(+). This chain is Glutaminase, found in Pseudomonas fluorescens (strain Pf0-1).